A 402-amino-acid chain; its full sequence is UPF0261 protein BP1203 (402 aa).

Belongs to the UPF0261 family.

The protein is UPF0261 protein BP1203 of Bordetella pertussis (strain Tohama I / ATCC BAA-589 / NCTC 13251).